We begin with the raw amino-acid sequence, 403 residues long: 26S proteasome regulatory subunit 8 homolog (403 aa).

186 to 193 contributes to the ATP binding site; it reads GPPGTGKT.

Belongs to the AAA ATPase family.

It localises to the cytoplasm. The protein localises to the nucleus. Functionally, the 26S proteasome is involved in the ATP-dependent degradation of ubiquitinated proteins. The regulatory (or ATPase) complex confers ATP dependency and substrate specificity to the 26S complex. This is 26S proteasome regulatory subunit 8 homolog (let1) from Schizosaccharomyces pombe (strain 972 / ATCC 24843) (Fission yeast).